The sequence spans 1358 residues: Retrotransposon-like protein 1 (1358 aa).

Disordered regions lie at residues 1-159 (MIEP…TEHS) and 563-616 (ADVF…TAPW). The span at 19–30 (SSKQMESSEGSS) shows a compositional bias: low complexity. Positions 65-79 (EMEELPTDLLQDMEE) are enriched in acidic residues. The span at 131–149 (AREEQEAHTDLKESGREET) shows a compositional bias: basic and acidic residues. The span at 583 to 592 (GSDDLSESEP) shows a compositional bias: acidic residues. Helical transmembrane passes span 1083 to 1099 (LLYW…LVLL) and 1126 to 1146 (LILD…TQLL). Disordered stretches follow at residues 1250–1283 (DGLQ…PRHL) and 1338–1358 (QPRE…ANLD). The segment covering 1267–1276 (APPSHTAATH) has biased composition (low complexity). A compositionally biased stretch (basic and acidic residues) spans 1338–1347 (QPREQARLEE). Over residues 1348–1358 (LPDEDEDANLD) the composition is skewed to acidic residues.

Its subcellular location is the membrane. Its function is as follows. Plays an essential role in capillaries endothelial cells for the maintenance of feto-maternal interface and for development of the placenta. In Homo sapiens (Human), this protein is Retrotransposon-like protein 1 (RTL1).